The following is a 108-amino-acid chain: U-scoloptoxin(10)-Sm1a (108 aa).

The N-terminal stretch at 1–24 (MNKQWLHFFSVLLLCYVIEETCSL) is a signal peptide.

It belongs to the scoloptoxin-10 family. Contains 3 disulfide bonds. Expressed by the venom gland.

The protein resides in the secreted. The sequence is that of U-scoloptoxin(10)-Sm1a from Scolopendra morsitans (Tanzanian blue ringleg centipede).